Reading from the N-terminus, the 270-residue chain is Large ribosomal subunit protein bL21m (270 aa).

A mitochondrion-targeting transit peptide spans 1–68 (MASLRCFREL…HWYRSQDRCF (68 aa)). The interval 68-113 (FSSNTKDTDEDEESSEGEDDDEEEGEDFEDSADMEVEREYSPAEKV) is disordered. Over residues 75-101 (TDEDEESSEGEDDDEEEGEDFEDSADM) the composition is skewed to acidic residues. Residues 102-113 (EVEREYSPAEKV) show a composition bias toward basic and acidic residues.

Belongs to the bacterial ribosomal protein bL21 family. As to quaternary structure, component of the mitochondrial ribosome large subunit. In terms of tissue distribution, constitutively expressed in roots, stems, leaves, flowers, pistils and siliques.

It is found in the mitochondrion. In terms of biological role, this protein binds to 23S ribosomal RNA in the presence of protein L20. Required for karyogamy during female gametophyte development, when the two polar nuclei fuse to form the diploid central cell nucleus, and during double fertilization of the egg cell and the central cell. This chain is Large ribosomal subunit protein bL21m, found in Arabidopsis thaliana (Mouse-ear cress).